A 367-amino-acid chain; its full sequence is tRNA (guanine(26)-N(2))-dimethyltransferase (367 aa).

The Trm1 methyltransferase domain maps to 1-365 (MRVSEGRVTV…ADVVEIREAT (365 aa)). S-adenosyl-L-methionine is bound by residues R34, R64, D79, D105, and A106. Zn(2+)-binding residues include C234, C237, C254, and C257.

Belongs to the class I-like SAM-binding methyltransferase superfamily. Trm1 family.

It catalyses the reaction guanosine(26) in tRNA + 2 S-adenosyl-L-methionine = N(2)-dimethylguanosine(26) in tRNA + 2 S-adenosyl-L-homocysteine + 2 H(+). Dimethylates a single guanine residue at position 26 of a number of tRNAs using S-adenosyl-L-methionine as donor of the methyl groups. The polypeptide is tRNA (guanine(26)-N(2))-dimethyltransferase (Haloarcula marismortui (strain ATCC 43049 / DSM 3752 / JCM 8966 / VKM B-1809) (Halobacterium marismortui)).